A 430-amino-acid chain; its full sequence is Adenylosuccinate synthetase (430 aa).

GTP is bound by residues 12–18 and 40–42; these read GDEGKGK and GHT. Residue Asp13 is the Proton acceptor of the active site. Residues Asp13 and Gly40 each coordinate Mg(2+). IMP is bound by residues 13–16, 38–41, Thr129, Arg143, Gln224, Thr239, and Arg303; these read DEGK and NAGH. The active-site Proton donor is His41. 299–305 is a binding site for substrate; the sequence is TVSNRKR. GTP-binding positions include Arg305, 331 to 333, and 413 to 415; these read KLD and STG.

It belongs to the adenylosuccinate synthetase family. As to quaternary structure, homodimer. Mg(2+) is required as a cofactor.

It localises to the cytoplasm. The catalysed reaction is IMP + L-aspartate + GTP = N(6)-(1,2-dicarboxyethyl)-AMP + GDP + phosphate + 2 H(+). Its pathway is purine metabolism; AMP biosynthesis via de novo pathway; AMP from IMP: step 1/2. In terms of biological role, plays an important role in the de novo pathway of purine nucleotide biosynthesis. Catalyzes the first committed step in the biosynthesis of AMP from IMP. This chain is Adenylosuccinate synthetase, found in Ehrlichia chaffeensis (strain ATCC CRL-10679 / Arkansas).